A 186-amino-acid chain; its full sequence is Astacin-like metalloprotease toxin 5 (186 aa).

The region spanning 1–186 (NAVKYDQQLW…CHSKRKAELL (186 aa)) is the Peptidase M12A domain. Cystine bridges form between Cys42/Cys177 and Cys63/Cys84. His92 lines the Zn(2+) pocket. Glu93 is a catalytic residue. His96 and His102 together coordinate Zn(2+). Residue Asn122 is glycosylated (N-linked (GlcNAc...) asparagine).

As to quaternary structure, monomer. The cofactor is Zn(2+). In terms of tissue distribution, expressed by the venom gland.

The protein resides in the secreted. With respect to regulation, inhibited by 1,10-phenanthroline. In terms of biological role, zinc metalloprotease. Provoques deadhesion of endothelial cells from cell cultures, and also degradation of fibronectin, fibrinogen and gelatin in vitro. Its role in the venom is not fully understood but it might act as a spreading factor that facilitates diffusion of other venom toxins. Alternatively, it might be involved in the proteolytic processing of other venom toxins or it might play a role in extra-oral digestion of prey. This Loxosceles gaucho (Spider) protein is Astacin-like metalloprotease toxin 5.